Consider the following 362-residue polypeptide: N-acylethanolamine-hydrolyzing acid amidase (362 aa).

An N-terminal signal peptide occupies residues M1–V33. Residues N42 and N112 are each glycosylated (N-linked (GlcNAc...) asparagine). Residue C131 is the Nucleophile of the active site. N-linked (GlcNAc...) asparagine glycans are attached at residues N314 and N338.

The protein belongs to the acid ceramidase family. Heterodimer of an alpha and a beta subunit, produced by autocatalytic cleavage. In terms of processing, N-glycosylated. Tunicamycin treatment causes a reduction in specific activity against N-palmitoylethanolamine. Autoproteolytic cleavage at pH 4.5 gives rise to the alpha and beta subunit. Cleavage gives rise to a conformation change that activates the enzyme. The same catalytic Cys residue mediates the autoproteolytic cleavage and subsequent hydrolysis of lipid substrates.

The protein localises to the lysosome. The protein resides in the membrane. The catalysed reaction is N-hexadecanoylethanolamine + H2O = ethanolamine + hexadecanoate. It catalyses the reaction an N-(long-chain fatty acyl)ethanolamine + H2O = a long-chain fatty acid + ethanolamine. The enzyme catalyses N-dodecanoylethanolamine + H2O = dodecanoate + ethanolamine. It carries out the reaction N-tetradecanoylethanolamine + H2O = tetradecanoate + ethanolamine. The catalysed reaction is an N-acylsphing-4-enine + H2O = sphing-4-enine + a fatty acid. It catalyses the reaction N-hexadecanoylsphing-4-enine + H2O = sphing-4-enine + hexadecanoate. The enzyme catalyses N-dodecanoylsphing-4-enine + H2O = dodecanoate + sphing-4-enine. It functions in the pathway lipid metabolism; fatty acid metabolism. Functionally, degrades bioactive fatty acid amides to their corresponding acids, with the following preference: N-palmitoylethanolamine &gt; N-myristoylethanolamine &gt; N-stearoylethanolamine &gt; N-oleoylethanolamine &gt; N-linoleoylethanolamine &gt; N-arachidonoylethanolamine. This Mus musculus (Mouse) protein is N-acylethanolamine-hydrolyzing acid amidase.